The primary structure comprises 118 residues: Putative pterin-4-alpha-carbinolamine dehydratase (118 aa).

This sequence belongs to the pterin-4-alpha-carbinolamine dehydratase family.

The catalysed reaction is (4aS,6R)-4a-hydroxy-L-erythro-5,6,7,8-tetrahydrobiopterin = (6R)-L-erythro-6,7-dihydrobiopterin + H2O. This chain is Putative pterin-4-alpha-carbinolamine dehydratase, found in Pseudomonas fluorescens (strain ATCC BAA-477 / NRRL B-23932 / Pf-5).